We begin with the raw amino-acid sequence, 662 residues long: PAN2-PAN3 deadenylation complex subunit PAN3 (662 aa).

Disordered regions lie at residues 1 to 29 (MASA…NAKD) and 53 to 133 (DPHK…DTVT). The C3H1-type zinc finger occupies 26 to 55 (NAKDTLCRNITIYGRCRYEDKGCAFNHDPH). A compositionally biased stretch (low complexity) spans 75–102 (SFTPSLLSSNGSSPTSTPATTKKMTTIS). Residues 115–133 (SVVSRSNASTPGLRQDTVT) show a composition bias toward polar residues. The pseudokinase domain stretch occupies residues 263 to 525 (QTLPNTQLPA…NIDVFITGIS (263 aa)). Residues arginine 315, 364 to 371 (DYHPLSKT), and 425 to 426 (SK) each bind ATP. Positions 526 to 564 (SQLMSTFDSALHLDDQLTSDLSRELENGRLVRLMAKLNF) form a coiled coil. The interval 565–662 (VNERPEYEHD…ALMKPARRMH (98 aa)) is knob domain.

It belongs to the protein kinase superfamily. PAN3 family. As to quaternary structure, homodimer. Forms a heterotrimer with a catalytic subunit pan2 to form the poly(A)-nuclease (PAN) deadenylation complex. Interacts (via PAM-2 motif) with poly(A)-binding protein pab1 (via PABC domain), conferring substrate specificity of the enzyme complex.

It is found in the cytoplasm. In terms of biological role, regulatory subunit of the poly(A)-nuclease (PAN) deadenylation complex, one of two cytoplasmic mRNA deadenylases involved in mRNA turnover. PAN specifically shortens poly(A) tails of RNA and the activity is stimulated by poly(A)-binding protein pab1. PAN deadenylation is followed by rapid degradation of the shortened mRNA tails by the CCR4-NOT complex. Deadenylated mRNAs are then degraded by two alternative mechanisms, namely exosome-mediated 3'-5' exonucleolytic degradation, or deadenylation-dependent mRNA decaping and subsequent 5'-3' exonucleolytic degradation by xrn1. May also be involved in post-transcriptional maturation of mRNA poly(A) tails. pan3 acts as a positive regulator for PAN activity, recruiting the catalytic subunit pan2 to mRNA via its interaction with RNA and with pab1. In Aspergillus fumigatus (strain ATCC MYA-4609 / CBS 101355 / FGSC A1100 / Af293) (Neosartorya fumigata), this protein is PAN2-PAN3 deadenylation complex subunit PAN3.